Consider the following 112-residue polypeptide: Histone H2B (112 aa).

Residues 1–24 are disordered; that stretch reads MATPKSSSANRKKGGKKSHRKPKR. The span at 10–24 shows a compositional bias: basic residues; that stretch reads NRKKGGKKSHRKPKR.

The protein belongs to the histone H2B family. As to quaternary structure, the nucleosome is a histone octamer containing two molecules each of H2A, H2B, H3 and H4 assembled in one H3-H4 heterotetramer and two H2A-H2B heterodimers. The octamer wraps approximately 147 bp of DNA.

The protein resides in the nucleus. It is found in the chromosome. In terms of biological role, core component of nucleosome. Nucleosomes wrap and compact DNA into chromatin, limiting DNA accessibility to the cellular machineries which require DNA as a template. Histones thereby play a central role in transcription regulation, DNA repair, DNA replication and chromosomal stability. DNA accessibility is regulated via a complex set of post-translational modifications of histones, also called histone code, and nucleosome remodeling. This is Histone H2B from Trypanosoma cruzi.